The chain runs to 467 residues: Uronate isomerase (467 aa).

This sequence belongs to the metallo-dependent hydrolases superfamily. Uronate isomerase family.

The catalysed reaction is D-glucuronate = D-fructuronate. The enzyme catalyses aldehydo-D-galacturonate = keto-D-tagaturonate. It participates in carbohydrate metabolism; pentose and glucuronate interconversion. The sequence is that of Uronate isomerase from Flavobacterium johnsoniae (strain ATCC 17061 / DSM 2064 / JCM 8514 / BCRC 14874 / CCUG 350202 / NBRC 14942 / NCIMB 11054 / UW101) (Cytophaga johnsonae).